We begin with the raw amino-acid sequence, 215 residues long: Cytochrome b6 (215 aa).

Residues 32-52 (IFYCLGGITLTCFLVQVATGF) form a helical membrane-spanning segment. Cys35 lines the heme c pocket. Heme b contacts are provided by His86 and His100. The next 3 helical transmembrane spans lie at 90 to 110 (ASMM…TGGF), 116 to 136 (LTWV…VTGY), and 186 to 206 (LHTF…FLMI). 2 residues coordinate heme b: His187 and His202.

Belongs to the cytochrome b family. PetB subfamily. As to quaternary structure, the 4 large subunits of the cytochrome b6-f complex are cytochrome b6, subunit IV (17 kDa polypeptide, PetD), cytochrome f and the Rieske protein, while the 4 small subunits are PetG, PetL, PetM and PetN. The complex functions as a dimer. Requires heme b as cofactor. The cofactor is heme c.

Its subcellular location is the plastid. The protein resides in the chloroplast thylakoid membrane. Component of the cytochrome b6-f complex, which mediates electron transfer between photosystem II (PSII) and photosystem I (PSI), cyclic electron flow around PSI, and state transitions. This is Cytochrome b6 from Klebsormidium bilatum (Filamentous green alga).